A 150-amino-acid polypeptide reads, in one-letter code: MTTEKKTMNISEIQELLPHRYPFLLIDRVIDFQEAKYLHAIKNVSVNEPQFTGHFPQLPVFPGVLILEAMAQATGLLAFKSFGAPTENELYYFASVDGAKFRKPVVPGDQMVIEVEFLKERRGIAAFSGVAKVDGEVVCSAELKCARREF.

The active site involves His54.

The protein belongs to the thioester dehydratase family. FabZ subfamily.

The protein localises to the cytoplasm. The catalysed reaction is a (3R)-hydroxyacyl-[ACP] = a (2E)-enoyl-[ACP] + H2O. Functionally, involved in unsaturated fatty acids biosynthesis. Catalyzes the dehydration of short chain beta-hydroxyacyl-ACPs and long chain saturated and unsaturated beta-hydroxyacyl-ACPs. In Vibrio parahaemolyticus serotype O3:K6 (strain RIMD 2210633), this protein is 3-hydroxyacyl-[acyl-carrier-protein] dehydratase FabZ.